The primary structure comprises 250 residues: Large ribosomal subunit protein uL29m (250 aa).

The transit peptide at M1–C24 directs the protein to the mitochondrion. A disordered region spans residues V66–V86.

This sequence belongs to the universal ribosomal protein uL29 family. In terms of assembly, component of the mitochondrial large ribosomal subunit. Mature mitochondrial ribosomes consist of a small (37S) and a large (54S) subunit. The 37S subunit contains at least 33 different proteins and 1 molecule of RNA (15S). The 54S subunit contains at least 45 different proteins and 1 molecule of RNA (21S).

It localises to the mitochondrion. The sequence is that of Large ribosomal subunit protein uL29m (MRPL4) from Phaeosphaeria nodorum (strain SN15 / ATCC MYA-4574 / FGSC 10173) (Glume blotch fungus).